Here is a 1410-residue protein sequence, read N- to C-terminus: SNF2 domain-containing protein CLASSY 3 (1410 aa).

Over residues 1–12 the composition is skewed to basic residues; that stretch reads MECIGKRVKSRS. Disordered stretches follow at residues 1–74, 87–108, 209–330, 344–376, 428–593, and 632–654; these read MECI…SVPN, DLNV…SEQN, GEIE…PIKR, RSGS…QREV, NVSK…LKDK, and EDEA…REDH. Residues 22–29 carry the Nuclear localization signal 1 motif; it reads RKKMETVA. Over residues 95 to 108 the composition is skewed to polar residues; sequence GPSSSRLTDGSEQN. The span at 245-266 shows a compositional bias: acidic residues; it reads SDGEDSSSETDEEEEENQDSED. Residues 248–278 adopt a coiled-coil conformation; sequence EDSSSETDEEEEENQDSEDNNTKDNVTVESL. The segment covering 276 to 301 has biased composition (low complexity); that stretch reads ESLSSEDPSSSSSSSSSSSSSSSSSS. Over residues 306-323 the composition is skewed to basic and acidic residues; sequence SYVKEVVGDNRDDDDLRK. The short motif at 328–335 is the Nuclear localization signal 2 element; the sequence is IKRVSLVE. Basic and acidic residues predominate over residues 351–376; that stretch reads KPRERDNKIQKLNHREEEKKERQREV. Residues 356–377 are a coiled coil; the sequence is DNKIQKLNHREEEKKERQREVV. Residues 428-446 are compositionally biased toward polar residues; the sequence is NVSKYEDSVSINSGKTTGA. Composition is skewed to basic and acidic residues over residues 450–463 and 488–504; these read PEVE…ELNT and EPSR…KEVQ. Residues 576–587 are compositionally biased toward low complexity; that stretch reads SSISSGDGYESD. The Helicase ATP-binding domain occupies 850–1060; sequence FENSDETGGC…CNVLGLARPK (211 aa). Position 863–870 (863–870) interacts with ATP; that stretch reads HAPGTGKT. A DEAH box motif is present at residues 1011–1014; that stretch reads DEAH. The Nuclear localization signal 3 signature appears at 1132–1139; that stretch reads QRRVLESI. Residues 1206–1359 form the Helicase C-terminal domain; that stretch reads EFVELCEVIK…ELVFACSSRH (154 aa).

It belongs to the SNF2/RAD54 helicase family. In terms of assembly, interacts with NRPD1.

It is found in the nucleus. In terms of biological role, probable chromatin remodeling factor. This is SNF2 domain-containing protein CLASSY 3 (CLSY3) from Arabidopsis thaliana (Mouse-ear cress).